We begin with the raw amino-acid sequence, 595 residues long: DNA mismatch repair protein MutL (595 aa).

This sequence belongs to the DNA mismatch repair MutL/HexB family.

Its function is as follows. This protein is involved in the repair of mismatches in DNA. It is required for dam-dependent methyl-directed DNA mismatch repair. May act as a 'molecular matchmaker', a protein that promotes the formation of a stable complex between two or more DNA-binding proteins in an ATP-dependent manner without itself being part of a final effector complex. The sequence is that of DNA mismatch repair protein MutL from Rhodopseudomonas palustris (strain ATCC BAA-98 / CGA009).